The chain runs to 4691 residues: Plectin (4691 aa).

A globular 1 region spans residues 1–1478 (MVAGMLMPLD…SELTTLTSQY (1478 aa)). Arg21 is modified (phosphoserine). Val26 is subject to Phosphotyrosine. Disordered regions lie at residues 113 to 161 (RSPH…TPVV) and 167 to 186 (GTLA…RDRV). The segment covering 137–154 (DPAREERQVYRRKEREEG) has biased composition (basic and acidic residues). Positions 181 to 411 (DERDRVQKKT…YVSSLYDAMP (231 aa)) are actin-binding. 2 consecutive Calponin-homology (CH) domains span residues 185–293 (RVQK…LHFQ) and 306–411 (MTAK…DAMP). A Spectrin 1 repeat occupies 653–727 (LQSTQRRPEL…ERARNDESQL (75 aa)). At Ser728 the chain carries Phosphoserine. Spectrin repeat units lie at residues 748 to 832 (KLLN…REDH) and 845 to 938 (LQTQ…AIVQ). Thr823 bears the Phosphothreonine mark. One can recognise an SH3 domain in the interval 949 to 1006 (RGHVPLIAVCDYKQVEVTVHKGDQCQLVGPAQPSHWKVLSGSSSEAAVPSVCFLVPPP). Positions 963–4572 (VEVTVHKGDQ…ARTAQKLRDV (3610 aa)) are required for interaction with intermediate filament proteins. Ser1055 is subject to Phosphoserine. One copy of the Spectrin 4 repeat lies at 1323-1423 (RERVTQLLER…QKFAKQYINA (101 aa)). Ser1443 carries the post-translational modification Phosphoserine. Coiled coils occupy residues 1477 to 1697 (QYIK…ERRL) and 1729 to 2764 (SFAE…TTQA). A central fibrous rod domain region spans residues 1479 to 2762 (IKFISETLRR…ALAHSEIATT (1284 aa)). Residues 1626 to 1653 (RAEEAEAQKRQAQEEAERLRRQVQDESQ) form a disordered region. Ser1729 is subject to Phosphoserine. An N6-acetyllysine modification is found at Lys1733. Disordered regions lie at residues 1801–1835 (SLAQ…RELA), 2100–2141 (AEDT…SLAA), and 2223–2317 (RLRS…KHKK). 4 stretches are compositionally biased toward basic and acidic residues: residues 1806 to 1835 (DAEK…RELA), 2100 to 2116 (AEDT…EAAR), 2124 to 2136 (EEQR…ERVQ), and 2223 to 2266 (RLRS…KQSA). The span at 2267-2280 (EEQAQAQAQAQAAA) shows a compositional bias: low complexity. Residues 2281-2296 (EKLRKEAEQEAARRAQ) show a composition bias toward basic and acidic residues. The residue at position 2639 (Ser2639) is a Phosphoserine. Lys2644 is subject to N6-acetyllysine. The tract at residues 2675–2728 (LREEQQRQQQQMEQEKQELMASMEEARRRQREAEEGVRRKQEELQHLEQQRQQQ) is disordered. Positions 2687-2728 (EQEKQELMASMEEARRRQREAEEGVRRKQEELQHLEQQRQQQ) are enriched in basic and acidic residues. The globular 2 stretch occupies residues 2763–4691 (QAASTKALPN…SLGGPESAVA (1929 aa)). Residue Ser2781 is modified to Phosphoserine. Tyr2788 carries the phosphotyrosine modification. Plectin repeat units follow at residues 2795 to 2832 (QKVP…REDV), 2833 to 2870 (YRYL…PGTA), 2871 to 2908 (LILL…PELH), 2909 to 2946 (HKLL…RDHG), 2947 to 2984 (VRLL…EEMN), and 2988 to 3022 (SDPS…PETG). Ser2809 carries the phosphoserine modification. Phosphothreonine is present on Thr2893. Tyr3040 bears the Phosphotyrosine mark. N6-acetyllysine occurs at positions 3060 and 3098. Plectin repeat units follow at residues 3123-3160 (ALVP…ADSV), 3161-3198 (RQAL…PEVA), 3199-3236 (VALL…PELH), 3237-3274 (EKLL…REQG), 3275-3312 (LRLL…KETN), and 3315-3350 (LTSP…QLTG). Positions 3312–3326 (NRALTSPRDDARVYH) are enriched in basic and acidic residues. The disordered stretch occupies residues 3312–3338 (NRALTSPRDDARVYHDPSTQEPVTYSQ). Residues 3328 to 3338 (PSTQEPVTYSQ) are compositionally biased toward polar residues. Tyr3369 carries the post-translational modification Phosphotyrosine. Lys3427 bears the N6-acetyllysine mark. 5 Plectin repeats span residues 3492–3529 (RTLL…PSTA), 3530–3567 (TLLL…PELH), 3568–3605 (EKLL…RDHA), 3606–3643 (IRLL…EEMN), and 3647–3681 (ADPS…PETG). Position 3792 is a phosphothreonine (Thr3792). Phosphotyrosine is present on Tyr3797. Plectin repeat units follow at residues 3827–3864 (WRYL…AEVA), 3865–3902 (RLLL…PELH), 3903–3940 (DRLL…AEEA), 3941–3978 (LRLL…KDTH), and 3982–4015 (SEPS…DPSG). The interval 3954-4291 (VDPRLGFHLP…KRRVVIVDPE (338 aa)) is required for interaction with type2 keratins, DES and VIM. Thr4037 carries the phosphothreonine modification. A Phosphoserine modification is found at Ser4061. 6 Plectin repeats span residues 4070-4107 (QKFL…PGTA), 4108-4145 (FELL…PEFK), 4146-4183 (DKLL…KDHG), 4184-4221 (IRLL…EEMN), 4225-4259 (TDPS…PQTG), and 4272-4312 (RKTS…HQTY). The segment at 4257–4307 (QTGLCLLPLKEKKRERKTSSKSSVRKRRVVIVDPETGKEMSVYEAYRKGLI) is binding to intermediate filaments. Residues 4387–4420 (FRSRSSSVGSSSSYPISSAGPRTQLASWSDPTEE) form a disordered region. 8 positions are modified to phosphoserine: Ser4389, Ser4391, Ser4392, Ser4393, Ser4396, Ser4397, Ser4398, and Ser4399. Residues 4389–4404 (SRSSSVGSSSSYPISS) show a composition bias toward low complexity. Residue Tyr4400 is modified to Phosphotyrosine. Residues Ser4403 and Ser4413 each carry the phosphoserine modification. A compositionally biased stretch (polar residues) spans 4406–4416 (GPRTQLASWSD). 5 Plectin repeats span residues 4415–4452 (SDPT…NITG), 4453–4490 (QRLL…KIMV), 4491–4528 (DRIN…YEAG), 4529–4566 (QRFL…ARTA), and 4567–4604 (QKLR…EGTG). Thr4418 is subject to Phosphothreonine. Residues 4503 to 4572 (FEDPRTKTKM…ARTAQKLRDV (70 aa)) form a required for efficient interaction with KRT5 and KRT14 heterodimers region. Thr4546 is modified (phosphothreonine; by CDK1). 2 positions are modified to phosphoserine: Ser4614 and Ser4620. Residues 4618-4678 (YYSPYSVSGS…SGYGRRYASG (61 aa)) show a composition bias toward low complexity. The segment at 4618–4691 (YYSPYSVSGS…SLGGPESAVA (74 aa)) is disordered. Position 4622 is a phosphotyrosine (Tyr4622). Residues Ser4623, Ser4625, and Ser4629 each carry the phosphoserine modification. At Thr4630 the chain carries Phosphothreonine. The 4 X 4 AA tandem repeats of G-S-R-X stretch occupies residues 4632–4647 (GSRTGSRTGSRAGSRR). Phosphoserine is present on Ser4633. Arg4634 and Arg4647 each carry omega-N-methylarginine. 2 positions are modified to phosphoserine: Ser4649 and Ser4682.

The protein belongs to the plakin or cytolinker family. As to quaternary structure, homodimer or homotetramer. Interacts (via actin-binding domain) with SYNE3. Interacts (via calponin-homology (CH) 1 domain) with VIM (via rod region). Interacts (via N-terminus) with DST isoform 2 (via N-terminus). Interacts with FER. Interacts with TOR1A. Interacts with ANK3. Identified in complexes that contain VIM, EZR, AHNAK, BFSP1, BFSP2, ANK2, PLEC, PRX and spectrin. In terms of assembly, interacts with KRT14, heterodimers consisting of KRT8 and KRT18, heterodimers consisting of KRT5 and KRT14, heterodimers consisting of KRT14 and KRT15, and heterodimers consisting of KRT1 and KRT10. Interacts with DES and VIM. Phosphorylated by CDK1; regulates dissociation from intermediate filaments during mitosis. Isoform PLEC-1A is phosphorylated on Ser-21. Isoform PLEC-1A is phosphorylated on Tyr-26. Detected in eye lens fiber cells (at protein level). Expressed at high levels in lung, brain, small intestine, muscle, heart and skin with lower levels found in kidney, liver, uterus, spleen and salivary gland.

The protein resides in the cytoplasm. Its subcellular location is the cytoskeleton. It is found in the cell junction. The protein localises to the hemidesmosome. It localises to the cell projection. The protein resides in the podosome. Functionally, interlinks intermediate filaments with microtubules and microfilaments and anchors intermediate filaments to desmosomes or hemidesmosomes. May be involved not only in the cross-linking and stabilization of cytoskeletal intermediate filaments network, but also in the regulation of their dynamics. In Mus musculus (Mouse), this protein is Plectin (Plec).